A 392-amino-acid polypeptide reads, in one-letter code: UDP-N-acetylglucosamine--N-acetylmuramyl-(pentapeptide) pyrophosphoryl-undecaprenol N-acetylglucosamine transferase (392 aa).

Residues 14-16 (TGG), Asn-124, Arg-167, Ser-195, Ile-251, and Gln-296 each bind UDP-N-acetyl-alpha-D-glucosamine.

It belongs to the glycosyltransferase 28 family. MurG subfamily.

The protein resides in the cell inner membrane. It carries out the reaction di-trans,octa-cis-undecaprenyl diphospho-N-acetyl-alpha-D-muramoyl-L-alanyl-D-glutamyl-meso-2,6-diaminopimeloyl-D-alanyl-D-alanine + UDP-N-acetyl-alpha-D-glucosamine = di-trans,octa-cis-undecaprenyl diphospho-[N-acetyl-alpha-D-glucosaminyl-(1-&gt;4)]-N-acetyl-alpha-D-muramoyl-L-alanyl-D-glutamyl-meso-2,6-diaminopimeloyl-D-alanyl-D-alanine + UDP + H(+). Its pathway is cell wall biogenesis; peptidoglycan biosynthesis. In terms of biological role, cell wall formation. Catalyzes the transfer of a GlcNAc subunit on undecaprenyl-pyrophosphoryl-MurNAc-pentapeptide (lipid intermediate I) to form undecaprenyl-pyrophosphoryl-MurNAc-(pentapeptide)GlcNAc (lipid intermediate II). The protein is UDP-N-acetylglucosamine--N-acetylmuramyl-(pentapeptide) pyrophosphoryl-undecaprenol N-acetylglucosamine transferase of Sphingopyxis alaskensis (strain DSM 13593 / LMG 18877 / RB2256) (Sphingomonas alaskensis).